The following is a 257-amino-acid chain: UPF0246 protein Mpe_A2092 (257 aa).

This sequence belongs to the UPF0246 family.

The chain is UPF0246 protein Mpe_A2092 from Methylibium petroleiphilum (strain ATCC BAA-1232 / LMG 22953 / PM1).